Here is a 369-residue protein sequence, read N- to C-terminus: Phosphoribosyl pyrophosphate synthase-associated protein 2 (369 aa).

The residue at position 1 (Met-1) is an N-acetylmethionine. Phosphothreonine is present on Thr-5. Phosphoserine occurs at positions 219, 227, and 233.

It belongs to the ribose-phosphate pyrophosphokinase family. In terms of assembly, binds to PRPS1 and PRPS2. Ubiquitous.

Functionally, seems to play a negative regulatory role in 5-phosphoribose 1-diphosphate synthesis. In Homo sapiens (Human), this protein is Phosphoribosyl pyrophosphate synthase-associated protein 2 (PRPSAP2).